Reading from the N-terminus, the 142-residue chain is Hemoglobin subunit beta-C (142 aa).

A Globin domain is found at 1 to 142 (MPNKALITGF…VASALAHRYH (142 aa)). Heme b is bound by residues H59 and H88.

This sequence belongs to the globin family. In terms of assembly, heterotetramer of two alpha chains and two beta chains. Red blood cells.

Its function is as follows. Involved in oxygen transport from the lung to the various peripheral tissues. The polypeptide is Hemoglobin subunit beta-C (HBBC) (Capra hircus (Goat)).